Reading from the N-terminus, the 372-residue chain is Glutamate 5-kinase (372 aa).

Lys14 contributes to the ATP binding site. Residues Ser54, Asp141, and Asn153 each contribute to the substrate site. 173-174 contacts ATP; that stretch reads TD. Residues 280–358 enclose the PUA domain; sequence RGHVVIDDGA…GEIESVLGYM (79 aa).

It belongs to the glutamate 5-kinase family.

It is found in the cytoplasm. It carries out the reaction L-glutamate + ATP = L-glutamyl 5-phosphate + ADP. Its pathway is amino-acid biosynthesis; L-proline biosynthesis; L-glutamate 5-semialdehyde from L-glutamate: step 1/2. In terms of biological role, catalyzes the transfer of a phosphate group to glutamate to form L-glutamate 5-phosphate. This is Glutamate 5-kinase from Paraburkholderia phymatum (strain DSM 17167 / CIP 108236 / LMG 21445 / STM815) (Burkholderia phymatum).